Consider the following 343-residue polypeptide: L-threonine 3-dehydrogenase (343 aa).

Residue C38 coordinates Zn(2+). Residues T40 and H43 each act as charge relay system in the active site. H63, E64, C93, C96, C99, and C107 together coordinate Zn(2+). NAD(+) is bound by residues I175, D195, R200, 262–264, and 286–287; these read LGI and IY.

Belongs to the zinc-containing alcohol dehydrogenase family. Homotetramer. Zn(2+) serves as cofactor.

It localises to the cytoplasm. The enzyme catalyses L-threonine + NAD(+) = (2S)-2-amino-3-oxobutanoate + NADH + H(+). It functions in the pathway amino-acid degradation; L-threonine degradation via oxydo-reductase pathway; glycine from L-threonine: step 1/2. In terms of biological role, catalyzes the NAD(+)-dependent oxidation of L-threonine to 2-amino-3-ketobutyrate. The polypeptide is L-threonine 3-dehydrogenase (Paraburkholderia phytofirmans (strain DSM 17436 / LMG 22146 / PsJN) (Burkholderia phytofirmans)).